The chain runs to 134 residues: Cytochrome b5 (134 aa).

A2 carries the N-acetylalanine modification. N6-acetyllysine is present on residues K7, K10, and K19. The Cytochrome b5 heme-binding domain maps to 9 to 85 (VKYYTLEEIQ…SKTFIIGELH (77 aa)). Heme is bound by residues H44 and H68. A helical transmembrane segment spans residues 109 to 131 (WWTNWLIPAISALFVALIYHLYT).

Belongs to the cytochrome b5 family.

It localises to the endoplasmic reticulum membrane. It is found in the microsome membrane. Cytochrome b5 is a membrane-bound hemoprotein functioning as an electron carrier for several membrane-bound oxygenases. In Bos taurus (Bovine), this protein is Cytochrome b5 (CYB5A).